We begin with the raw amino-acid sequence, 362 residues long: Mitochondrial distribution and morphology protein 12 (362 aa).

The 361-residue stretch at 1-361 (MSFDINWSQL…WPSWLCFDMS (361 aa)) folds into the SMP-LTD domain. 2 disordered regions span residues 65–141 (DFYE…AATP) and 170–207 (TPSG…SKRG). Composition is skewed to polar residues over residues 106 to 119 (VTLS…TQFA) and 170 to 187 (TPSG…MRTG). Low complexity predominate over residues 192–201 (PISNTPISSS).

It belongs to the MDM12 family. Component of the ER-mitochondria encounter structure (ERMES) or MDM complex, composed of MMM1, MDM10, MDM12 and MDM34. An MMM1 homodimer associates with one molecule of MDM12 on each side in a pairwise head-to-tail manner, and the SMP-LTD domains of MMM1 and MDM12 generate a continuous hydrophobic tunnel for phospholipid trafficking.

Its subcellular location is the mitochondrion outer membrane. The protein resides in the endoplasmic reticulum membrane. Component of the ERMES/MDM complex, which serves as a molecular tether to connect the endoplasmic reticulum (ER) and mitochondria. Components of this complex are involved in the control of mitochondrial shape and protein biogenesis, and function in nonvesicular lipid trafficking between the ER and mitochondria. MDM12 is required for the interaction of the ER-resident membrane protein MMM1 and the outer mitochondrial membrane-resident beta-barrel protein MDM10. The MDM12-MMM1 subcomplex functions in the major beta-barrel assembly pathway that is responsible for biogenesis of all mitochondrial outer membrane beta-barrel proteins, and acts in a late step after the SAM complex. The MDM10-MDM12-MMM1 subcomplex further acts in the TOM40-specific pathway after the action of the MDM12-MMM1 complex. Essential for establishing and maintaining the structure of mitochondria and maintenance of mtDNA nucleoids. This chain is Mitochondrial distribution and morphology protein 12, found in Meyerozyma guilliermondii (strain ATCC 6260 / CBS 566 / DSM 6381 / JCM 1539 / NBRC 10279 / NRRL Y-324) (Yeast).